A 383-amino-acid chain; its full sequence is Delta(12) fatty acid desaturase FAD2 (383 aa).

The tract at residues 1-29 (MGAGGRMQDPTNGGNKTEPEPIQRVPHEK) is disordered. The span at 17-29 (TEPEPIQRVPHEK) shows a compositional bias: basic and acidic residues. 2 helical membrane-spanning segments follow: residues 50-70 (VIRS…LYYI) and 85-105 (VAWP…WVIA). Residues 106-110 (HECGH) carry the Histidine box-1 motif. The helical transmembrane segment at 118-138 (WLDDTVGLVLHSFLLVPYFSW) threads the bilayer. Positions 142 to 146 (HRRHH) match the Histidine box-2 motif. Helical transmembrane passes span 180–200 (ILTL…FNVS), 226–246 (IFIS…LAMT), and 252–272 (VLTM…LITF). The Histidine box-3 motif lies at 316 to 320 (HVAHH).

It belongs to the fatty acid desaturase type 1 family. As to expression, expressed in leaves, flower buds and developing seeds.

Its subcellular location is the membrane. It functions in the pathway lipid metabolism; polyunsaturated fatty acid biosynthesis. Its function is as follows. Catalyzes the desaturation of oleic acid to linoleic acid. Introduces a double bond at position 12 of 16:1(9Z) and 18:1(9Z). This Calendula officinalis (Pot marigold) protein is Delta(12) fatty acid desaturase FAD2.